The sequence spans 717 residues: ATP-dependent RNA helicase homolog DQX1 (717 aa).

The 169-residue stretch at 57 to 225 folds into the Helicase ATP-binding domain; the sequence is QLESNPTGVV…WGNPPIVHIP (169 aa). 70–77 is an ATP binding site; that stretch reads GEPGSGKS. The DEAQ box motif lies at 170–173; it reads DEAQ. One can recognise a Helicase C-terminal domain in the interval 248-447; that stretch reads ACQAVLELCR…ALMQALEDLD (200 aa). Positions 694–717 are disordered; the sequence is GMADSTAGSKSSSAQEFRDPCVLQ. Positions 699–708 are enriched in polar residues; the sequence is TAGSKSSSAQ.

Its subcellular location is the nucleus. Functionally, might be involved in RNA metabolism; it is missing helicase motif III and may not have helicase activity. This is ATP-dependent RNA helicase homolog DQX1 (DQX1) from Homo sapiens (Human).